A 451-amino-acid chain; its full sequence is Trigger factor (451 aa).

The PPIase FKBP-type domain maps to 165–250 (DDKLTIDFEG…LRQIQVREAL (86 aa)).

The protein belongs to the FKBP-type PPIase family. Tig subfamily.

Its subcellular location is the cytoplasm. The catalysed reaction is [protein]-peptidylproline (omega=180) = [protein]-peptidylproline (omega=0). Functionally, involved in protein export. Acts as a chaperone by maintaining the newly synthesized protein in an open conformation. Functions as a peptidyl-prolyl cis-trans isomerase. In Helicobacter pylori (strain J99 / ATCC 700824) (Campylobacter pylori J99), this protein is Trigger factor (tig).